We begin with the raw amino-acid sequence, 219 residues long: Thiamine-phosphate synthase (219 aa).

Residues 45–49 (QYREK) and Asn77 each bind 4-amino-2-methyl-5-(diphosphooxymethyl)pyrimidine. Mg(2+)-binding residues include Asp78 and Asp97. Position 116 (Thr116) interacts with 4-amino-2-methyl-5-(diphosphooxymethyl)pyrimidine. 142-144 (SFT) is a 2-[(2R,5Z)-2-carboxy-4-methylthiazol-5(2H)-ylidene]ethyl phosphate binding site. Lys145 contacts 4-amino-2-methyl-5-(diphosphooxymethyl)pyrimidine. 2-[(2R,5Z)-2-carboxy-4-methylthiazol-5(2H)-ylidene]ethyl phosphate-binding positions include Gly173 and 193-194 (VT).

Belongs to the thiamine-phosphate synthase family. Mg(2+) is required as a cofactor.

It catalyses the reaction 2-[(2R,5Z)-2-carboxy-4-methylthiazol-5(2H)-ylidene]ethyl phosphate + 4-amino-2-methyl-5-(diphosphooxymethyl)pyrimidine + 2 H(+) = thiamine phosphate + CO2 + diphosphate. The catalysed reaction is 2-(2-carboxy-4-methylthiazol-5-yl)ethyl phosphate + 4-amino-2-methyl-5-(diphosphooxymethyl)pyrimidine + 2 H(+) = thiamine phosphate + CO2 + diphosphate. The enzyme catalyses 4-methyl-5-(2-phosphooxyethyl)-thiazole + 4-amino-2-methyl-5-(diphosphooxymethyl)pyrimidine + H(+) = thiamine phosphate + diphosphate. Its pathway is cofactor biosynthesis; thiamine diphosphate biosynthesis; thiamine phosphate from 4-amino-2-methyl-5-diphosphomethylpyrimidine and 4-methyl-5-(2-phosphoethyl)-thiazole: step 1/1. In terms of biological role, condenses 4-methyl-5-(beta-hydroxyethyl)thiazole monophosphate (THZ-P) and 2-methyl-4-amino-5-hydroxymethyl pyrimidine pyrophosphate (HMP-PP) to form thiamine monophosphate (TMP). This Caldicellulosiruptor bescii (strain ATCC BAA-1888 / DSM 6725 / KCTC 15123 / Z-1320) (Anaerocellum thermophilum) protein is Thiamine-phosphate synthase.